The following is a 341-amino-acid chain: Processive diacylglycerol beta-glycosyltransferase (341 aa).

This sequence belongs to the glycosyltransferase 2 family. It depends on Mg(2+) as a cofactor.

Its subcellular location is the cell membrane. The enzyme catalyses a 1,2-diacyl-sn-glycerol + UDP-alpha-D-glucose = a 1,2-diacyl-3-O-(beta-D-glucopyranosyl)-sn-glycerol + UDP + H(+). It catalyses the reaction a 1,2-diacyl-sn-glycerol + UDP-alpha-D-galactose = a 1,2-diacyl-3-O-(beta-D-galactosyl)-sn-glycerol + UDP + H(+). It carries out the reaction a 1,2-diacyl-3-O-(beta-D-galactosyl)-sn-glycerol + UDP-alpha-D-glucose = a 1,2-diacyl-3-O-[beta-D-glucopyranosyl-(1-&gt;6)-beta-D-galactopyranosyl]-sn-glycerol + UDP + H(+). The catalysed reaction is a 1,2-diacyl-3-O-(beta-D-galactosyl)-sn-glycerol + UDP-alpha-D-galactose = a 1,2-diacyl-3-O-[beta-D-galactosyl-(1-&gt;6)-beta-D-galactosyl]-sn-glycerol + UDP + H(+). With respect to regulation, activated by the negatively charged lipid phosphatidylglycerol (PG). Its function is as follows. Processive glycosyltransferase involved in the biosynthesis of both the non-bilayer-prone beta-monoglycosyldiacylglycerol and the bilayer-forming membrane lipid glucosyl-galactosyldiacylglycerol and digalactosyl-diacylglycerol. These components contribute to regulate the properties and stability of the membrane. Catalyzes sequentially the transfers of glucosyl or galactosyl residues from UDP-Glc or UDP-Gal to diacylglycerol (DAG) acceptor to form the corresponding beta-glycosyl-DAG (3-O-(beta-D-glycopyranosyl)-1,2-diacyl-sn-glycerol). Then, only beta-galactosyl-DAG (3-O-(beta-D-galactopyranosyl)-1,2-diacyl-sn-glycerol) can act as acceptor to give the beta-glycosyl-beta-galactosyl-DAG product (3-O-(beta-D-glycopyranosyl-(1-&gt;6)-D-galactopyranosyl)-1,2-diacyl-sn-glycerol). It can also use alpha-Gal-beta-Gal-DAG, ceramide (Cer) and beta-Gal-Cer as sugar acceptors. The enzyme is supposed to be mainly a galactosyltransferase, with higher glycosyltransferase activity for the addition of the second glycosyl on beta-Gal-DAG as acceptor. The main glycolipid produced in vivo is beta-Glc-beta-Gal-DAG with a beta-1,6 linkage. The protein is Processive diacylglycerol beta-glycosyltransferase of Mycoplasma pneumoniae (strain ATCC 29342 / M129 / Subtype 1) (Mycoplasmoides pneumoniae).